Consider the following 333-residue polypeptide: L-lactate dehydrogenase B chain (333 aa).

Residues 29 to 57 (GQVG…LEDK) and Arg-99 contribute to the NAD(+) site. 3 residues coordinate substrate: Arg-106, Asn-138, and Arg-169. Asn-138 lines the NAD(+) pocket. His-193 acts as the Proton acceptor in catalysis. Residue Thr-248 participates in substrate binding.

It belongs to the LDH/MDH superfamily. LDH family. In terms of assembly, homotetramer.

The protein resides in the cytoplasm. The enzyme catalyses (S)-lactate + NAD(+) = pyruvate + NADH + H(+). It functions in the pathway fermentation; pyruvate fermentation to lactate; (S)-lactate from pyruvate: step 1/1. Interconverts simultaneously and stereospecifically pyruvate and lactate with concomitant interconversion of NADH and NAD(+). The chain is L-lactate dehydrogenase B chain (LDHB) from Gallus gallus (Chicken).